A 303-amino-acid polypeptide reads, in one-letter code: Deoxyhypusine hydroxylase (303 aa).

At M1 the chain carries N-acetylmethionine. HEAT-like PBS-type repeat units lie at residues 23-49 (ARFR…AFDD), 54-80 (LKHE…VLRD), 87-113 (VRHE…YSTD), 175-201 (DRYR…GLRC), 206-232 (FRHE…ALAQ), and 239-265 (VRHE…HVAD). Positions 56, 89, and 90 each coordinate Fe cation. Residues H208, H241, and E242 each coordinate Fe cation.

It belongs to the deoxyhypusine hydroxylase family. Requires Fe(2+) as cofactor.

The enzyme catalyses [eIF5A protein]-deoxyhypusine + AH2 + O2 = [eIF5A protein]-hypusine + A + H2O. The protein operates within protein modification; eIF5A hypusination. Catalyzes the hydroxylation of the N(6)-(4-aminobutyl)-L-lysine intermediate produced by deoxyhypusine synthase/DHPS on a critical lysine of the eukaryotic translation initiation factor 5A/eIF-5A. This is the second step of the post-translational modification of that lysine into an unusual amino acid residue named hypusine. Hypusination is unique to mature eIF-5A factor and is essential for its function. The sequence is that of Deoxyhypusine hydroxylase from Bos taurus (Bovine).